An 847-amino-acid polypeptide reads, in one-letter code: MSRYDPAATESRWQAAWDAAGVFTARHDPARPKYYVLEMFPYPSGRIHMGHVRNYTMGDVVARQKAAAGFSVLHPMGWDAFGMPAENAAMERGGHPKDWTYGNIADMRAQMKPLGLSIDWSREFATCDPEYYGQQQAMFIDMMEAGLVYRKNAVVNWDPVDMTVLANEQVIDGKGWRSGAPVVRRELTQWFFRISDYAGELLEALDTLKDWPEKVRLMQANWIGQSRGLQFAFSMAGAPEGFDRLEVYTTRPDTLMGASFAAISPDHPLARHLERHDAEVAEFVAECRRVGTSEEALEKAEKKGFDTGLRVRHPFDTAWELPVYIANFILMDYGTGAIFGCPAHDQRDFEFATKYGLPIRPVFLPEDTEETALAEAFVPMKSERVHYIRGFAGAEVQTGEEGVAAAIDFCESQGVGRGVTNYRLRDWGISRQRYWGCPIPVIHCETCGVVPEAKENLPVRLPDDVSFDVPGNPLDRHPTWRDCTCPKCGAKARRETDTMDTFVDSSWYYARFTAPRAATPTDAEEADYWMNVDQYIGGIEHAILHLLYSRFFARAMQKTGHLPAKAIEPFNALFTQGMVTHEIYLTRDAAGRPVYHLPEDVTDGRLADGTPVEIIPSAKMSKSKKNVVDPMNIIRQFGADTARWFVMSDSPPERDVEWTASGAEAASKHLHRVWRLADEISRADGEANAEDGALDKATARAIAEVTQGVEGFAFNKAIAKLYEFTNTLSRSGAGAEAKKRAMRTMAQLMSPMVPHLAEEVWAMLGGEGLVAQAAWPKADPALLIDDTVTLPIQVNGKRRGEITVPKEMAASEVEKLVLADEAVQRALGGAAPKKLIVVPGRIVNVVI.

The short motif at 41–51 (PYPSGRIHMGH) is the 'HIGH' region element. The 'KMSKS' region signature appears at 619-623 (KMSKS). Residue lysine 622 coordinates ATP.

Belongs to the class-I aminoacyl-tRNA synthetase family.

The protein localises to the cytoplasm. The catalysed reaction is tRNA(Leu) + L-leucine + ATP = L-leucyl-tRNA(Leu) + AMP + diphosphate. This is Leucine--tRNA ligase from Cereibacter sphaeroides (strain ATCC 17029 / ATH 2.4.9) (Rhodobacter sphaeroides).